Reading from the N-terminus, the 190-residue chain is Peptidyl-tRNA hydrolase (190 aa).

Phe-14 contributes to the tRNA binding site. Catalysis depends on His-19, which acts as the Proton acceptor. Residues Met-64, Asn-66, and Asn-112 each contribute to the tRNA site.

This sequence belongs to the PTH family. Monomer.

It is found in the cytoplasm. The catalysed reaction is an N-acyl-L-alpha-aminoacyl-tRNA + H2O = an N-acyl-L-amino acid + a tRNA + H(+). In terms of biological role, hydrolyzes ribosome-free peptidyl-tRNAs (with 1 or more amino acids incorporated), which drop off the ribosome during protein synthesis, or as a result of ribosome stalling. Functionally, catalyzes the release of premature peptidyl moieties from peptidyl-tRNA molecules trapped in stalled 50S ribosomal subunits, and thus maintains levels of free tRNAs and 50S ribosomes. This is Peptidyl-tRNA hydrolase from Staphylococcus aureus (strain Mu3 / ATCC 700698).